Reading from the N-terminus, the 163-residue chain is HTH-type transcriptional regulator IscR (163 aa).

Residues 2–131 (RLTSKGRYAV…NNITLGELVN (130 aa)) form the HTH rrf2-type domain. Positions 28–51 (LADISERQGISLSYLEQLFSRLRK) form a DNA-binding region, H-T-H motif. The [2Fe-2S] cluster site is built by Cys92, Cys98, and Cys104. Residues 140 to 149 (DRQHTHDAPR) show a composition bias toward basic and acidic residues. The segment at 140–163 (DRQHTHDAPRSTRTQDAIDVKLRA) is disordered.

Requires [2Fe-2S] cluster as cofactor.

Regulates the transcription of several operons and genes involved in the biogenesis of Fe-S clusters and Fe-S-containing proteins. This is HTH-type transcriptional regulator IscR from Citrobacter koseri (strain ATCC BAA-895 / CDC 4225-83 / SGSC4696).